The following is a 322-amino-acid chain: ATP-dependent 6-phosphofructokinase (322 aa).

G13 provides a ligand contact to ATP. Position 23 to 27 (23 to 27 (RAVVR)) interacts with ADP. Residues 74–75 (RC) and 104–107 (GDGS) each bind ATP. Mg(2+) is bound at residue D105. A substrate-binding site is contributed by 127–129 (TID). Residue D129 is the Proton acceptor of the active site. Residue R156 coordinates ADP. Residues R164 and 171–173 (MGR) each bind substrate. Residues 187-189 (GAE) and 215-217 (KRH) each bind ADP. Substrate-binding positions include E224, R246, and 252–255 (HIQR).

Belongs to the phosphofructokinase type A (PFKA) family. ATP-dependent PFK group I subfamily. Prokaryotic clade 'B1' sub-subfamily. Homotetramer. Mg(2+) serves as cofactor.

It localises to the cytoplasm. It catalyses the reaction beta-D-fructose 6-phosphate + ATP = beta-D-fructose 1,6-bisphosphate + ADP + H(+). The protein operates within carbohydrate degradation; glycolysis; D-glyceraldehyde 3-phosphate and glycerone phosphate from D-glucose: step 3/4. With respect to regulation, allosterically activated by ADP and other diphosphonucleosides, and allosterically inhibited by phosphoenolpyruvate. Functionally, catalyzes the phosphorylation of D-fructose 6-phosphate to fructose 1,6-bisphosphate by ATP, the first committing step of glycolysis. In Paenibacillus macquariensis (Bacillus macquariensis), this protein is ATP-dependent 6-phosphofructokinase.